A 530-amino-acid chain; its full sequence is MKGTLSVLCLVLLVSVLEAAVTKPKFGDFIGCLRYRTSPENPITDAISFADNTTTFLSSYVSYTKNKRFSTPNYRKLLAIVAAKHVSHVQATVVCAKSNGIQLRIRSGGHDYEGLSYMSSVPFVILDMYNLRSITVDVSSKKAWIQAGATLGELYTNVNDVSQTLAFPAGVCATVGAGGHISGGGYGNLMRKYGITVDHVIDAQIIDVNGKLLNRATMGEDLFWAIRGGGGGSFGVILSWKINLVDVPKIVTVFKVNKTLEQGGTDVLYKWQLVASKFPESLFVRAMPQVANGTKRGERTITVVFYAQFLGRTDALMAIMNQNWPELGLKHEDCQEMSWLNSTLFWADYPAGTPTSILLDRPSSPGDFFKSKSDYVKKPIPKEGLEKLWKTMLKFNNNIVWMQFNPYGGVMDRIPATATAFPHRKGNLFKIQYFTTWFNANATMSSLSQMKELYEVAEPYVSSNPREAFFNYRDIDVGSNPSGETNVDEAKIYGSKYFLGNLKRLMDVKAKYDPDNFFKNEQSIPPVRVM.

Residues 1–19 (MKGTLSVLCLVLLVSVLEA) form the signal peptide. Cys32 and Cys95 form a disulfide bridge. Asn52 carries N-linked (GlcNAc...) asparagine glycosylation. Residues 73–247 (NYRKLLAIVA…LSWKINLVDV (175 aa)) form the FAD-binding PCMH-type domain. A cross-link (6-(S-cysteinyl)-8alpha-(pros-histidyl)-FAD (His-Cys)) is located at residues 110–172 (HDYEGLSYMS…QTLAFPAGVC (63 aa)). 4 N-linked (GlcNAc...) asparagine glycosylation sites follow: Asn257, Asn292, Asn341, and Asn441.

This sequence belongs to the oxygen-dependent FAD-linked oxidoreductase family. Requires FAD as cofactor. Post-translationally, the FAD cofactor is bound via a bicovalent 6-S-cysteinyl, 8alpha-N1-histidyl FAD linkage.

The protein localises to the secreted. The protein resides in the cell wall. Its function is as follows. Probable flavin-dependent oxidoreductase. This chain is Berberine bridge enzyme-like 4, found in Arabidopsis thaliana (Mouse-ear cress).